The following is a 429-amino-acid chain: Histidine--tRNA ligase (429 aa).

The protein belongs to the class-II aminoacyl-tRNA synthetase family. Homodimer.

The protein localises to the cytoplasm. It carries out the reaction tRNA(His) + L-histidine + ATP = L-histidyl-tRNA(His) + AMP + diphosphate + H(+). This is Histidine--tRNA ligase from Corynebacterium efficiens (strain DSM 44549 / YS-314 / AJ 12310 / JCM 11189 / NBRC 100395).